The following is a 274-amino-acid chain: Serine protease 28 (274 aa).

An N-terminal signal peptide occupies residues 1–26 (MFRLLLLALSCLESTVFMASVSISRS). Positions 31–274 (IVGGQRTPPG…SLAWIHQHIQ (244 aa)) constitute a Peptidase S1 domain. Cysteine 62 and cysteine 78 are oxidised to a cystine. The active-site Charge relay system is histidine 77. An N-linked (GlcNAc...) asparagine glycan is attached at asparagine 106. Aspartate 124 (charge relay system) is an active-site residue. 3 cysteine pairs are disulfide-bonded: cysteine 158/cysteine 233, cysteine 191/cysteine 214, and cysteine 223/cysteine 251. Serine 227 acts as the Charge relay system in catalysis.

It belongs to the peptidase S1 family. Homooligomer, heterodimer and heterotetramer. Able to form homo- and hetero- tetrameric structures. Heterotetramer is far more stable than the homotetramer. Expressed in embryos throughout the preimplantation period, during blastocyst hatching and embryo outgrowth. Found in uterus especially in glandular epithelium.

The protein localises to the secreted. With respect to regulation, inhibited by benzamidine, (4-amidino-phenyl)-methane-sulfonyl (APMSF), N-p-tosyl-L-lysine chloromethylketone (TLCK), gabexate, mesylate, BABIM and trypsin soybean inhibitor (TSI). Involved in embryo hatching and implantation. The polypeptide is Serine protease 28 (Prss28) (Mus musculus (Mouse)).